The primary structure comprises 289 residues: Zinc finger matrin-type protein 3 (289 aa).

The disordered stretch occupies residues 1-42 (MILLQHAVLPPPKQPSPSPPMSVATRSTGTLQLPPQKPFGQE). The segment covering 9–20 (LPPPKQPSPSPP) has biased composition (pro residues). A compositionally biased stretch (polar residues) spans 24-33 (ATRSTGTLQL). 2 consecutive Matrin-type zinc fingers follow at residues 70-100 (LYCK…KLRN) and 147-177 (DYCK…RLRL). The span at 180–191 (AQSNSFSESSEL) shows a compositional bias: polar residues. A disordered region spans residues 180-201 (AQSNSFSESSELGQRRARKEGN). The segment at 246-276 (FYCSMCNVGAGEEMEFRQHLESKQHKSKVSE) adopts a Matrin-type 3 zinc-finger fold.

As to quaternary structure, interacts with dsRNA. In terms of tissue distribution, highly expressed in adult brain, and moderately in adult kidney and testis. Not detected in fetal brain, heart, pancreas, adrenal gland, liver or small intestine.

The protein resides in the nucleus. Its subcellular location is the nucleolus. Its function is as follows. Acts as a bona fide target gene of p53/TP53. May play a role in the TP53-dependent growth regulatory pathway. May contribute to TP53-mediated apoptosis by regulation of TP53 expression and translocation to the nucleus and nucleolus. This chain is Zinc finger matrin-type protein 3, found in Homo sapiens (Human).